We begin with the raw amino-acid sequence, 105 residues long: Iron-sulfur cluster assembly protein CyaY (105 aa).

The protein belongs to the frataxin family.

Functionally, involved in iron-sulfur (Fe-S) cluster assembly. May act as a regulator of Fe-S biogenesis. The protein is Iron-sulfur cluster assembly protein CyaY of Paraburkholderia xenovorans (strain LB400).